The primary structure comprises 197 residues: Probable molybdenum cofactor guanylyltransferase (197 aa).

GTP contacts are provided by residues Leu-12 to Gly-14, Lys-24, Asp-71, and Asp-103. Asp-103 lines the Mg(2+) pocket.

Belongs to the MobA family. The cofactor is Mg(2+).

Its subcellular location is the cytoplasm. It carries out the reaction Mo-molybdopterin + GTP + H(+) = Mo-molybdopterin guanine dinucleotide + diphosphate. Functionally, transfers a GMP moiety from GTP to Mo-molybdopterin (Mo-MPT) cofactor (Moco or molybdenum cofactor) to form Mo-molybdopterin guanine dinucleotide (Mo-MGD) cofactor. The polypeptide is Probable molybdenum cofactor guanylyltransferase (Mycobacterium avium (strain 104)).